The sequence spans 493 residues: Voltage-gated potassium channel regulatory subunit KCNF1 (493 aa).

The Cytoplasmic portion of the chain corresponds to 1–183 (MDASAEQSLP…KPESSCPARV (183 aa)). Residues 184–204 (VAVLSFLLILVSSVVMCMGTI) form a helical membrane-spanning segment. The Extracellular segment spans residues 205–223 (PELQVVDSEGNRVEHPTLE). The helical transmembrane segment at 224–244 (NVETACIGWFTLEYLLRLFSS) threads the bilayer. The Cytoplasmic segment spans residues 245 to 249 (PNKLH). A helical membrane pass occupies residues 250–270 (FALSFMNIVDVLAILPFYVSL). At 271–289 (TLTHLGARMMELTNVQQAV) the chain is on the extracellular side. A helical; Voltage-sensor transmembrane segment spans residues 290-310 (QALRIMRIARIFKLARHSSGL). Over 311–324 (QTLTYALKRSFKEL) the chain is Cytoplasmic. The helical transmembrane segment at 325–345 (GLLLMYLAVGIFVFSALGYTM) threads the bilayer. At 346-357 (EQSHPETLFKSI) the chain is on the extracellular side. An intramembrane region (pore-forming) is located at residues 358–378 (PQSFWWAIITMTTVGYGDIYP). Residues 370–375 (TVGYGD) carry the Selectivity filter motif. The Extracellular segment spans residues 379 to 385 (KTTLGKL). A helical transmembrane segment spans residues 386–406 (NAAISFLCGVIAIALPIHPII). Residues 407–493 (NNFVRYYNKQ…HHRTRLQSCK (87 aa)) are Cytoplasmic-facing. Residues 433–468 (NSSSAESKPGGSRSDLDTLPPEPAAREGPSWGSRLK) are disordered.

The protein belongs to the potassium channel family. F (TC 1.A.1.2) subfamily. Kv5.1/KCNF1 sub-subfamily. As to quaternary structure, heterotetramer with KCNB1 or KCNB2. Expressed in brain namely in the piriform cortex, olfactory tubercle, and medial habenular nucleus. Also expressed in the medial amygdaloid nuclei and the lateral amygdaloid area.

The protein localises to the cell membrane. Its function is as follows. Regulatory alpha-subunit of the voltage-gated potassium (Kv) channel which, when coassembled with KCNB1 or KCNB2, can modulate their expression and their gating kinetics by acting on deactivation upon repolarization and inactivation during maintained depolarization. Accelerates inactivation but has relatively little effect on deactivation. Coexpression with KCNB1 or KCNB2 markedly slows inactivation. Each modulatory subunit has its own specific properties of regulation, and can lead to extensive inhibitions, to large changes in kinetics, and/or to large shifts in the voltage dependencies of the inactivation process. The gating kinetics depends on the nature and stoichiometry of the associated regulatory sunbunit. Fails to produce a potassium current when expressed alone. The protein is Voltage-gated potassium channel regulatory subunit KCNF1 of Rattus norvegicus (Rat).